The following is a 276-amino-acid chain: NH(3)-dependent NAD(+) synthetase (276 aa).

43 to 50 (GISGGVDS) lines the ATP pocket. Asp49 contributes to the Mg(2+) binding site. Arg146 is a binding site for deamido-NAD(+). Position 166 (Thr166) interacts with ATP. A Mg(2+)-binding site is contributed by Glu171. Deamido-NAD(+)-binding residues include Lys179 and Asp186. The ATP site is built by Lys195 and Thr217. Residue 266–267 (HK) participates in deamido-NAD(+) binding.

This sequence belongs to the NAD synthetase family. Homodimer.

It catalyses the reaction deamido-NAD(+) + NH4(+) + ATP = AMP + diphosphate + NAD(+) + H(+). Its pathway is cofactor biosynthesis; NAD(+) biosynthesis; NAD(+) from deamido-NAD(+) (ammonia route): step 1/1. Catalyzes the ATP-dependent amidation of deamido-NAD to form NAD. Uses ammonia as a nitrogen source. This Shewanella woodyi (strain ATCC 51908 / MS32) protein is NH(3)-dependent NAD(+) synthetase.